The chain runs to 454 residues: Cathepsin C (454 aa).

The N-terminal stretch at 1–20 (MHWVFHCILIILACLRFTCA) is a signal peptide. The propeptide occupies 21-217 (DTPANCTYED…SKELISLTGN (197 aa)). An N-linked (GlcNAc...) asparagine glycan is attached at Asn-25. 3 disulfides stabilise this stretch: Cys-26/Cys-107, Cys-244/Cys-287, and Cys-280/Cys-321. Residue Cys-247 is part of the active site. Asn-265 carries an N-linked (GlcNAc...) asparagine glycan. Residue Phe-291 participates in chloride binding. A glycan (N-linked (GlcNAc...) asparagine) is linked at Asn-326. A chloride-binding site is contributed by Tyr-337. Catalysis depends on residues His-398 and Asn-420.

Belongs to the peptidase C1 family. Chloride serves as cofactor.

It is found in the lysosome. Thiol protease. Has a role as a digestive enzyme. This Schistosoma mansoni (Blood fluke) protein is Cathepsin C.